Here is a 301-residue protein sequence, read N- to C-terminus: Pyridoxal 5'-phosphate synthase subunit PdxS (301 aa).

Asp31 contacts D-ribose 5-phosphate. The Schiff-base intermediate with D-ribose 5-phosphate role is filled by Lys88. Gly160 contacts D-ribose 5-phosphate. Lys172 lines the D-glyceraldehyde 3-phosphate pocket. D-ribose 5-phosphate-binding positions include Gly221 and 242–243 (GS).

This sequence belongs to the PdxS/SNZ family. In the presence of PdxT, forms a dodecamer of heterodimers.

It carries out the reaction aldehydo-D-ribose 5-phosphate + D-glyceraldehyde 3-phosphate + L-glutamine = pyridoxal 5'-phosphate + L-glutamate + phosphate + 3 H2O + H(+). Its pathway is cofactor biosynthesis; pyridoxal 5'-phosphate biosynthesis. Its function is as follows. Catalyzes the formation of pyridoxal 5'-phosphate from ribose 5-phosphate (RBP), glyceraldehyde 3-phosphate (G3P) and ammonia. The ammonia is provided by the PdxT subunit. Can also use ribulose 5-phosphate and dihydroxyacetone phosphate as substrates, resulting from enzyme-catalyzed isomerization of RBP and G3P, respectively. The polypeptide is Pyridoxal 5'-phosphate synthase subunit PdxS (Methanosarcina mazei (strain ATCC BAA-159 / DSM 3647 / Goe1 / Go1 / JCM 11833 / OCM 88) (Methanosarcina frisia)).